A 339-amino-acid chain; its full sequence is AT-hook motif nuclear-localized protein 26 (339 aa).

Residues 1-12 show a composition bias toward polar residues; the sequence is MDPVQSHGSQSS. Disordered regions lie at residues 1 to 132 and 273 to 339; these read MDPV…NKPK and MQTP…RPPY. Low complexity predominate over residues 24-45; sequence LHLQQQQQHQQQHQQQQQQQFF. The segment covering 82 to 93 has biased composition (polar residues); that stretch reads NMDNIANTNSGS. Gly residues predominate over residues 102-113; that stretch reads GGEGGSGGGGSG. The a.T hook DNA-binding region spans 118–130; that stretch reads RRPRGRPAGSKNK. Residues 142 to 279 enclose the PPC domain; sequence ANALRTHVME…EDEMQTPVQG (138 aa). Over residues 278 to 291 the composition is skewed to gly residues; it reads QGGGGGGGGGGGMG. A compositionally biased stretch (low complexity) spans 292-310; it reads SPPMMGQQQAMAAMAAAQG.

It is found in the nucleus. Transcription factor that specifically binds AT-rich DNA sequences related to the nuclear matrix attachment regions (MARs). This chain is AT-hook motif nuclear-localized protein 26, found in Arabidopsis thaliana (Mouse-ear cress).